We begin with the raw amino-acid sequence, 859 residues long: MEPLSHRGLPRLSWIDTLYSNFSYGTDEYDGEGNEEQKGPPEGSETMPYIDESPTMSPQLSARSQGGGDGVSPTPPEGLAPGVEAGKGLEMRKLVLSGFLASEEIYINQLEALLLPMKPLKATATTSQPVLTIQQIETIFYKIQDIYEIHKEFYDNLCPKVQQWDSQVTMGHLFQKLASQLGVYKAFVDNYKVALETAEKCSQSNNQFQKISEELKVKGPKDSKDSHTSVTMEALLYKPIDRVTRSTLVLHDLLKHTPVDHPDYPLLQDALRISQNFLSSINEDIDPRRTAVTTPKGETRQLVKDGFLVEVSESSRKLRHVFLFTDVLLCAKLKKTSAGKHQQYDCKWYIPLADLVFPSPEESEASPQVHPFPDHELEDMKMKISALKSEIQKEKANKGQSRAIERLKKKMFENEFLLLLNSPTIPFRIHNRNGKSYLFLLSSDYERSEWREAIQKLQKKDLQAFVLSSVELQVLTGSCFKLRTVHNIPVTSNKDDDESPGLYGFLHVIVHSAKGFKQSANLYCTLEVDSFGYFVSKAKTRVFRDTAEPKWDEEFEIELEGSQSLRILCYEKCYDKTKVNKDNNEIVDKIMGKGQIQLDPQTVETKNWHTDVIEMNGIKVEFSMKFTSRDMSLKRTPSKKQTGVFGVKISVVTKRERSKVPYIVRQCVEEVEKRGIEEVGIYRISGVATDIQALKAVFDANNKDILLMLSDMDINAIAGTLKLYFRELPEPLLTDRLYPAFMEGIALSDPAAKENCMMHLLRSLPDPNLITFLFLLEHLKRVAEKEPINKMSLHNLATVFGPTLLRPSEVESKAHLTSAADIWSHDVMAQVQVLLYYLQHPPISFAELKRNTLYFSTDV.

The disordered stretch occupies residues 26–84 (TDEYDGEGNEEQKGPPEGSETMPYIDESPTMSPQLSARSQGGGDGVSPTPPEGLAPGVE). Polar residues predominate over residues 54–64 (PTMSPQLSARS). Serine 57 is modified (phosphoserine). The DH domain maps to 91–284 (MRKLVLSGFL…QNFLSSINED (194 aa)). The region spanning 301-459 (QLVKDGFLVE…WREAIQKLQK (159 aa)) is the PH domain. The 130-residue stretch at 484-613 (TVHNIPVTSN…ETKNWHTDVI (130 aa)) folds into the C2 domain. In terms of domain architecture, Rho-GAP spans 647–845 (VKISVVTKRE…YYLQHPPISF (199 aa)).

Interacts with DLG4. Highly enriched in the brain. Much weaker expression in heart, lung and muscle.

The protein localises to the cell projection. The protein resides in the dendritic spine. Its subcellular location is the axon. It is found in the synapse. Functionally, protein with a unique structure having two opposing regulatory activities toward small GTP-binding proteins. The C-terminus is a GTPase-activating protein domain which stimulates GTP hydrolysis by RAC1, RAC2 and CDC42. Accelerates the intrinsic rate of GTP hydrolysis of RAC1 or CDC42, leading to down-regulation of the active GTP-bound form. The central Dbl homology (DH) domain functions as a guanine nucleotide exchange factor (GEF) that modulates the GTPases CDC42, RHOA and RAC1. Promotes the conversion of CDC42, RHOA and RAC1 from the GDP-bound to the GTP-bound form. Functions as an important negative regulator of neuronal RAC1 activity. Regulates macrophage functions such as CSF-1 directed motility and phagocytosis through the modulation of RAC1 activity. This Homo sapiens (Human) protein is Active breakpoint cluster region-related protein.